Reading from the N-terminus, the 121-residue chain is Large ribosomal subunit protein uL18 (121 aa).

Belongs to the universal ribosomal protein uL18 family. In terms of assembly, part of the 50S ribosomal subunit; part of the 5S rRNA/L5/L18/L25 subcomplex. Contacts the 5S and 23S rRNAs.

Functionally, this is one of the proteins that bind and probably mediate the attachment of the 5S RNA into the large ribosomal subunit, where it forms part of the central protuberance. This chain is Large ribosomal subunit protein uL18, found in Anaplasma phagocytophilum (strain HZ).